Reading from the N-terminus, the 537-residue chain is Putative cysteine ligase BshC (537 aa).

A coiled-coil region spans residues 422-450 (IEKVEGMIEQQRRLNKDLLDEVAGNQNNI).

Belongs to the BshC family.

Its function is as follows. Involved in bacillithiol (BSH) biosynthesis. May catalyze the last step of the pathway, the addition of cysteine to glucosamine malate (GlcN-Mal) to generate BSH. The chain is Putative cysteine ligase BshC from Staphylococcus aureus (strain Mu3 / ATCC 700698).